A 702-amino-acid polypeptide reads, in one-letter code: MNSLFASTARGLEELLKTELEKLGAVGCQVVQGGVHFQGDTRLIYQSLMWSRLASRIILPMGECKVYSDLDLYLGVQAINWTEIFNLGATFAVHFSGLNDTIRNSQYGAMKVKDAIVDAFTRKNLPRPNVDRESPDLRINVWLNKETASIALDLSGDGLHLRGYRDRTGLAPIKETLAAAIVMRSGWQPGTPLLDPMCGSGTLLIEAAMWATDRAPGLHRGHWGFSGWAQHDETIWQEVKAEAQTRARKGLAEYSSHFYGSDSDARVIERARSNARRAGIGELITFEVKDVAQLSNPLPKGPYGTVISNPPYGERLDSEPALIALHSLLGRTMKNQFGGWNLSLFSASPDLLGSLQLRADKQFKAKNGPLDCVQKNYHIAETTADSKPATVAEDYANRLRKNLKKLEKWARQEGIECYRLYDADLPEYNVAVDRYGDWAVIQEYAPPKTVDAQKARQRLFDIIAATLSVLGIPPNKLVLKTRERQKGKNQYQKMSEKGEFLEVSEYNARLWVNLTDYLDTGLFLDHRIARRMLGEMSKGKDFLNLFSYTGSASVHAGLGGARSTTTVDMSRTYLEWAERNLRLNGLSGRAHRLIQADCLGWLREANEQFDLIFIDPPTFSNSKRMEESFDVQRDHVALMKDLKRLLRKGGTIMFSNNKRGFRMDLEGLAELGLTAQEITQKTLSPDFARNRQIHNCWLIRAA.

One can recognise a THUMP domain in the interval 43–154 (LIYQSLMWSR…KETASIALDL (112 aa)).

Belongs to the methyltransferase superfamily. RlmKL family.

It localises to the cytoplasm. It carries out the reaction guanosine(2445) in 23S rRNA + S-adenosyl-L-methionine = N(2)-methylguanosine(2445) in 23S rRNA + S-adenosyl-L-homocysteine + H(+). The catalysed reaction is guanosine(2069) in 23S rRNA + S-adenosyl-L-methionine = N(2)-methylguanosine(2069) in 23S rRNA + S-adenosyl-L-homocysteine + H(+). In terms of biological role, specifically methylates the guanine in position 2445 (m2G2445) and the guanine in position 2069 (m7G2069) of 23S rRNA. This Salmonella choleraesuis (strain SC-B67) protein is Ribosomal RNA large subunit methyltransferase K/L.